The primary structure comprises 226 residues: Protein GrpE (226 aa).

2 disordered regions span residues 1–24 and 205–226; these read MADE…PRDR and GVSK…EDNA. The span at 217–226 shows a compositional bias: polar residues; it reads NGASTSEDNA.

It belongs to the GrpE family. As to quaternary structure, homodimer.

It is found in the cytoplasm. Functionally, participates actively in the response to hyperosmotic and heat shock by preventing the aggregation of stress-denatured proteins, in association with DnaK and GrpE. It is the nucleotide exchange factor for DnaK and may function as a thermosensor. Unfolded proteins bind initially to DnaJ; upon interaction with the DnaJ-bound protein, DnaK hydrolyzes its bound ATP, resulting in the formation of a stable complex. GrpE releases ADP from DnaK; ATP binding to DnaK triggers the release of the substrate protein, thus completing the reaction cycle. Several rounds of ATP-dependent interactions between DnaJ, DnaK and GrpE are required for fully efficient folding. This chain is Protein GrpE, found in Brucella melitensis biotype 1 (strain ATCC 23456 / CCUG 17765 / NCTC 10094 / 16M).